The sequence spans 248 residues: Glutaredoxin domain-containing cysteine-rich protein 2 (248 aa).

Composition is skewed to basic and acidic residues over residues 1 to 16 and 157 to 172; these read MEDPEKKLNQKSDGKP and LMNKEESYGGRDQHDR. 2 disordered regions span residues 1–20 and 150–172; these read MEDPEKKLNQKSDGKPRKVR and EEAEEESLMNKEESYGGRDQHDR.

The protein belongs to the GRXCR2 family. As to quaternary structure, interacts with TPRN; the interaction restricts TPRN to the stereocilum basal region.

It is found in the cell projection. The protein resides in the stereocilium. Required for hearing. Plays a role in maintaining cochlear stereocilia bundles that are involved in sound detection. Ensures the restriction of TPRN to the basal region of stereocilia in hair cells. The polypeptide is Glutaredoxin domain-containing cysteine-rich protein 2 (GRXCR2) (Homo sapiens (Human)).